We begin with the raw amino-acid sequence, 621 residues long: ATP-dependent lipid A-core flippase (621 aa).

A run of 5 helical transmembrane segments spans residues 32 to 52 (IVAALIAIFGVAATESYLAAF), 91 to 111 (VWGTENKIWTVPLFLIILVVI), 192 to 212 (IVLLYLNWQLSLIVVLMFPLL), 286 to 306 (SPFSELIASIALAVVIFIALW), and 312 to 332 (YTTIGEFMAFIVAMLQMYAPI). In terms of domain architecture, ABC transmembrane type-1 spans 33–344 (VAALIAIFGV…LANISIPMQT (312 aa)). Residues 378-611 (FRNVDVEYRS…NGYYTMLRNI (234 aa)) enclose the ABC transporter domain. 410–417 (GRSGSGKS) contributes to the ATP binding site.

This sequence belongs to the ABC transporter superfamily. Lipid exporter (TC 3.A.1.106) family. In terms of assembly, homodimer.

It is found in the cell inner membrane. The enzyme catalyses ATP + H2O + lipid A-core oligosaccharideSide 1 = ADP + phosphate + lipid A-core oligosaccharideSide 2.. Its function is as follows. Involved in lipopolysaccharide (LPS) biosynthesis. Translocates lipid A-core from the inner to the outer leaflet of the inner membrane. Transmembrane domains (TMD) form a pore in the inner membrane and the ATP-binding domain (NBD) is responsible for energy generation. In Neisseria meningitidis serogroup B (strain ATCC BAA-335 / MC58), this protein is ATP-dependent lipid A-core flippase.